We begin with the raw amino-acid sequence, 395 residues long: E3 ubiquitin-protein ligase NHLRC1 (395 aa).

The segment at 26-72 (CKVCFEKFGHRQQRRPRNLSCGHVVCLACVAALAHPRTLALECPFCR) adopts an RING-type zinc-finger fold. 6 NHL repeats span residues 113–157 (ALTC…FDSG), 161–204 (AHQF…FDFF), 205–245 (GQIK…LDVD), 248–300 (EGVL…FSSS), 301–349 (MQLV…LGKP), and 350–393 (EEFP…YKVD).

Interacts with AGL. Interacts (via the NHL repeats) with EPM2A/laforin. Forms a complex with EPM2A/laforin and HSP70. Interacts with PRDM8. Expressed in brain, cerebellum, spinal cord, medulla, heart, liver, skeletal muscle and pancreas.

It localises to the endoplasmic reticulum. Its subcellular location is the nucleus. It catalyses the reaction S-ubiquitinyl-[E2 ubiquitin-conjugating enzyme]-L-cysteine + [acceptor protein]-L-lysine = [E2 ubiquitin-conjugating enzyme]-L-cysteine + N(6)-ubiquitinyl-[acceptor protein]-L-lysine.. Its pathway is protein modification; protein ubiquitination. In terms of biological role, E3 ubiquitin-protein ligase. Together with the phosphatase EPM2A/laforin, appears to be involved in the clearance of toxic polyglucosan and protein aggregates via multiple pathways. In complex with EPM2A/laforin and HSP70, suppresses the cellular toxicity of misfolded proteins by promoting their degradation through the ubiquitin-proteasome system (UPS). Ubiquitinates the glycogen-targeting protein phosphatase subunits PPP1R3C/PTG and PPP1R3D in a laforin-dependent manner and targets them for proteasome-dependent degradation, thus decreasing glycogen accumulation. Polyubiquitinates EPM2A/laforin and ubiquitinates AGL and targets them for proteasome-dependent degradation. Also promotes proteasome-independent protein degradation through the macroautophagy pathway. The sequence is that of E3 ubiquitin-protein ligase NHLRC1 (NHLRC1) from Homo sapiens (Human).